The chain runs to 336 residues: Glycerol-3-phosphate dehydrogenase [NAD(P)+] (336 aa).

Positions 14, 15, 35, 36, and 109 each coordinate NADPH. Positions 109 and 139 each coordinate sn-glycerol 3-phosphate. NADPH is bound at residue Ala-143. Positions 194, 247, 257, 258, and 259 each coordinate sn-glycerol 3-phosphate. The active-site Proton acceptor is Lys-194. Arg-258 provides a ligand contact to NADPH. Glu-284 lines the NADPH pocket.

It belongs to the NAD-dependent glycerol-3-phosphate dehydrogenase family.

The protein localises to the cytoplasm. The enzyme catalyses sn-glycerol 3-phosphate + NAD(+) = dihydroxyacetone phosphate + NADH + H(+). It catalyses the reaction sn-glycerol 3-phosphate + NADP(+) = dihydroxyacetone phosphate + NADPH + H(+). Its pathway is membrane lipid metabolism; glycerophospholipid metabolism. Catalyzes the reduction of the glycolytic intermediate dihydroxyacetone phosphate (DHAP) to sn-glycerol 3-phosphate (G3P), the key precursor for phospholipid synthesis. The sequence is that of Glycerol-3-phosphate dehydrogenase [NAD(P)+] from Streptomyces coelicolor (strain ATCC BAA-471 / A3(2) / M145).